A 473-amino-acid polypeptide reads, in one-letter code: ATP synthase subunit beta (473 aa).

158 to 165 is an ATP binding site; sequence GGAGVGKT.

This sequence belongs to the ATPase alpha/beta chains family. F-type ATPases have 2 components, CF(1) - the catalytic core - and CF(0) - the membrane proton channel. CF(1) has five subunits: alpha(3), beta(3), gamma(1), delta(1), epsilon(1). CF(0) has three main subunits: a(1), b(2) and c(9-12). The alpha and beta chains form an alternating ring which encloses part of the gamma chain. CF(1) is attached to CF(0) by a central stalk formed by the gamma and epsilon chains, while a peripheral stalk is formed by the delta and b chains.

It localises to the cell membrane. It catalyses the reaction ATP + H2O + 4 H(+)(in) = ADP + phosphate + 5 H(+)(out). Functionally, produces ATP from ADP in the presence of a proton gradient across the membrane. The catalytic sites are hosted primarily by the beta subunits. This chain is ATP synthase subunit beta, found in Geobacillus sp. (strain WCH70).